Here is a 307-residue protein sequence, read N- to C-terminus: Elongation factor Ts (307 aa).

The interval 80–83 (TDFV) is involved in Mg(2+) ion dislocation from EF-Tu.

This sequence belongs to the EF-Ts family.

Its subcellular location is the cytoplasm. Associates with the EF-Tu.GDP complex and induces the exchange of GDP to GTP. It remains bound to the aminoacyl-tRNA.EF-Tu.GTP complex up to the GTP hydrolysis stage on the ribosome. The sequence is that of Elongation factor Ts from Xanthobacter autotrophicus (strain ATCC BAA-1158 / Py2).